Consider the following 138-residue polypeptide: Phospholipase A2 homolog crotoxin acid subunit CA (138 aa).

The signal sequence occupies residues 1-37; the sequence is MRALWIVAVLLVGVEGSLVEFETLMMKIAGRSGISYY. 8 disulfides stabilise this stretch: cysteine 42-cysteine 131, cysteine 44-cysteine 60, cysteine 59-cysteine 111, cysteine 65-cysteine 138, cysteine 66-cysteine 104, cysteine 73-cysteine 97, cysteine 91-cysteine 102, and cysteine 131-cysteine 138. Residues 79–82 constitute a propeptide that is removed on maturation; the sequence is VYTY. Glutamine 84 bears the Pyrrolidone carboxylic acid mark. Positions 119-124 are excised as a propeptide; sequence YDYKYL. Glutamine 125 is modified (pyrrolidone carboxylic acid).

It belongs to the phospholipase A2 family. Group II subfamily. D49 sub-subfamily. As to quaternary structure, heterodimer of one of the acidic (CA1, CA2, CA3 or CA4) and one of the basic (CBa1, CBa2, CBb, CBc or CBd) subunits; non-covalently linked. The acidic subunit is non-toxic, without enzymatic activity and comprises 3 peptides that are cross-linked by 5 disulfide bridges. The basic subunit is toxic, has phospholipase A2 activity and is composed of a single chain. Multiple variants of each subunit give different crotoxin complexes that can be subdivided into 2 classes: (1) those of high toxicity, low PLA2 activity (CBb, CBc and CBd linked with high affinity to any CA) and high stability (K(d)=4.5 nM) and (2) those of moderate toxicity, high PLA2 activity (CBa2 linked with low affinity to any CA) and low stability (K(d)=25 nM). As to expression, expressed by the venom gland.

The protein localises to the secreted. Functionally, CAalpha-CAbeta-CAgamma: The acidic subunit of crotoxin (CA) is a heterotrimer of three disulfide-linked chains generated by post-translational maturation of a PLA2-like precursor. CA has no PLA2 activity and is not neurotoxic by itself, but plays several important functions in the crotoxin complex by increasing the lethal potency of the uncomplexed CB subunit. It acts by physically occluding the hydrophobic interfacial binding surface (IBS) of CB. This effect decreases the adsorption of CB to phospholipid membranes, targeting the crotoxin complex to reach the specific presynaptic receptor (R48) at the neuromuscular junction. It also prevents the formation of the reactive CB dimer. Moreover, the CA subunit inhibits the catalytic activity by partially masking the catalytic site of CB and inhibits its anticoagulant activity. Its function is as follows. Heterodimer CA-CB: Crotoxin is a potent presynaptic neurotoxin that possesses phospholipase A2 (PLA2) activity and exerts a lethal action by blocking neuromuscular transmission. It consists of a non-covalent association of a basic and weakly toxic PLA2 subunit (CBa2, CBb, CBc, or CBd), with a small acidic, non-enzymatic and non-toxic subunit (CA1, CA2, CA3 or CA4). The complex acts by binding to a specific 48-kDa protein (R48/CAPT) receptor located on presynaptic membranes, forming a transient ternary complex CA-CB-R48, followed by dissociation of the CA-CB complex and release of the CA subunit. At equilibrium, only the CB subunits remain associated with the specific crotoxin receptor. In addition to neurotoxicity, crotoxin has been found to exert myotoxicity, nephrotoxicity, and cardiovascular toxicity. Moreover, anti-inflammatory, immunomodulatory, anti-tumor and analgesic effects of crotoxin have also been reported. Found in the venom as a monomer and stabilized by one disulfide bond (Cys-131 and Cys-138). This peptide induces potent antinociceptive effects in acute and chronic pain models. This effect is mediated by the release of peripheral dynorphin A, an endogenous agonist of kappa-opioid receptors, and this release is dependent on cannabinoid receptor CB2 activation. The sequence is that of Phospholipase A2 homolog crotoxin acid subunit CA from Crotalus durissus terrificus (South American rattlesnake).